The sequence spans 419 residues: UDP-N-acetylglucosamine 1-carboxyvinyltransferase (419 aa).

Phosphoenolpyruvate is bound at residue 22–23 (KN). A UDP-N-acetyl-alpha-D-glucosamine-binding site is contributed by arginine 91. The active-site Proton donor is the cysteine 115. At cysteine 115 the chain carries 2-(S-cysteinyl)pyruvic acid O-phosphothioketal. UDP-N-acetyl-alpha-D-glucosamine contacts are provided by residues 120–124 (RPVDL), 160–163 (KVSV), aspartate 305, and isoleucine 327.

Belongs to the EPSP synthase family. MurA subfamily.

The protein localises to the cytoplasm. It catalyses the reaction phosphoenolpyruvate + UDP-N-acetyl-alpha-D-glucosamine = UDP-N-acetyl-3-O-(1-carboxyvinyl)-alpha-D-glucosamine + phosphate. The protein operates within cell wall biogenesis; peptidoglycan biosynthesis. In terms of biological role, cell wall formation. Adds enolpyruvyl to UDP-N-acetylglucosamine. This chain is UDP-N-acetylglucosamine 1-carboxyvinyltransferase, found in Sodalis glossinidius (strain morsitans).